The chain runs to 105 residues: Large ribosomal subunit protein uL24 (105 aa).

It belongs to the universal ribosomal protein uL24 family. As to quaternary structure, part of the 50S ribosomal subunit.

Functionally, one of two assembly initiator proteins, it binds directly to the 5'-end of the 23S rRNA, where it nucleates assembly of the 50S subunit. One of the proteins that surrounds the polypeptide exit tunnel on the outside of the subunit. The polypeptide is Large ribosomal subunit protein uL24 (Azoarcus sp. (strain BH72)).